Here is a 300-residue protein sequence, read N- to C-terminus: Jacalin-related lectin 33 (300 aa).

The tract at residues 1-20 (MAQKVEAGGGAGGASWDDGV) is disordered. Alanine 2 is subject to N-acetylalanine. Jacalin-type lectin domains are found at residues 2-146 (AQKV…YFAT) and 154-297 (AKKL…HVMP).

This sequence belongs to the jacalin lectin family. Component of the PYK10 complex, at least composed of PYK10/BGLU23, BGLU21, BGLU22, JAL22, JAL23, PBP1/JAL30, PBP2/JAL31, JAL32, JAL33, JAL34, JAL35, GLL22 and GLL23.

Functionally, sugar-binding protein showing significant affinity for (Glc alpha(1-4)Glc)(3) maltohexaose, (Glc alpha(1-6)Glc)(3) isomaltohexaose, Gal alpha(1-4)Gal beta(1-4)Glc, GalNAc alpha(1-3)(Fuc alpha(1-2)) and Gal beta(1-3)(Fuc alpha(1-4))GlcNAc beta(1-3)Gal beta(1-4)Glc. The chain is Jacalin-related lectin 33 (JAL33) from Arabidopsis thaliana (Mouse-ear cress).